The following is a 232-amino-acid chain: NKG2-D type II integral membrane protein (232 aa).

Residues Met-1–Phe-66 are Cytoplasmic-facing. A helical; Signal-anchor for type II membrane protein membrane pass occupies residues Val-67–Ile-89. At Phe-90 to Val-232 the chain is on the extracellular side. Cystine bridges form between Cys-112–Cys-121 and Cys-115–Cys-126. Residues His-122–Met-228 enclose the C-type lectin domain. N-linked (GlcNAc...) asparagine glycans are attached at residues Asn-137, Asn-147, and Asn-179. Disulfide bonds link Cys-143–Cys-227 and Cys-205–Cys-219.

Homodimer; disulfide-linked. Heterohexamer composed of two subunits of KLRK1 and four subunits of HCST/DAP10. Isoform 1 (via transmembrane domain) interacts with HCST/DAP10; the interaction is required for KLRK1 cell surface expression on activated CD8(+) T-cells, but is dispensable on activated TYROBP-expressing NK cells. Isoform 2 (via transmembrane domain) interacts with HCST/DAP10 (via transmembrane domain); the interaction is required for KLRK1 NK cell surface expression and induces NK cell-mediated cytotoxicity. Isoform 2 (via transmembrane domain) interacts with TYROBP (via transmembrane domain); the interaction is required for KLRK1 NK cell surface expression and induce NK cell-mediated cytotoxicity and cytokine secretion. Isoform 1 does not interact with TYROBP. Interacts with CEACAM1; recruits PTPN6 that dephosphorylates VAV1. As to expression, expressed in natural killer (NK) cells, activated CD8(+) alpha-beta and gamma-delta T-cells and natural killer T (NKT) cells (at protein level). May be expressed on dendritic cell (DC). Isoform 1 is strongly expressed in natural killer (NK) cells. Isoform 2 is weakly expressed in natural killer (NK) cells. Isoform 1 and isoform 2 are expressed in stimulated, but not in unstimulated, CD8(+) T-cells and macrophages.

It is found in the cell membrane. Its function is as follows. Functions as an activating and costimulatory receptor involved in immunosurveillance upon binding to various cellular stress-inducible ligands displayed at the surface of autologous tumor cells and virus-infected cells. Provides both stimulatory and costimulatory innate immune responses on activated killer (NK) cells, leading to cytotoxic activity. Acts as a costimulatory receptor for T-cell receptor (TCR) in CD8(+) T-cell-mediated adaptive immune responses by amplifying T-cell activation. Stimulates perforin-mediated elimination of ligand-expressing tumor cells. Signaling involves calcium influx, culminating in the expression of TNF-alpha. Participates in NK cell-mediated bone marrow graft rejection. May play a regulatory role in differentiation and survival of NK cells. Binds to ligands belonging to various subfamilies of MHC class I-related glycoproteins including RAET1A, RAET1B, RAET1C, RAET1D, RAET1E, H60 and MULT1. The protein is NKG2-D type II integral membrane protein (Klrk1) of Mus musculus (Mouse).